The sequence spans 673 residues: Mechanosensitive ion channel protein 2, chloroplastic (673 aa).

A chloroplast-targeting transit peptide spans 1–75 (MALYGTLQLS…SVPCRTTAFR (75 aa)). A run of 5 helical transmembrane segments spans residues 107–127 (FPFVYKLVPAVALLVFSLWGL), 152–172 (YHVMTSYVQPLLLWLGALFIC), 193–213 (LNFVRSLSTVLAFAYCLSSLI), 240–260 (ALYSAVWVAAVSLFMELLGFS), and 264–284 (WLTAGGLGTVLITLAGREILT). Residues 492–673 (KINGEDKSKS…QPNSGASTEP (182 aa)) are disordered. 3 stretches are compositionally biased toward basic and acidic residues: residues 510–525 (AEQENKGSNPKSKETS), 564–576 (TPKDTETSGTEKP), and 617–642 (GSKRTLPIEEEIHSPPMETDAKELTG). The residue at position 571 (S571) is a Phosphoserine. Residues 661-673 (SQSQPNSGASTEP) show a composition bias toward polar residues.

It belongs to the MscS (TC 1.A.23) family. Widely expressed.

It is found in the plastid. The protein localises to the chloroplast membrane. Functionally, mechanosensitive channel that opens in response to stretch forces in the membrane lipid bilayer. Controls plastid size, shape, and perhaps division during normal plant development by altering ion flux in response to changes in membrane tension. Acts as a component of the chloroplast division machinery. The chain is Mechanosensitive ion channel protein 2, chloroplastic (MSL2) from Arabidopsis thaliana (Mouse-ear cress).